A 207-amino-acid chain; its full sequence is Large ribosomal subunit protein uL3 (207 aa).

Positions 119 to 143 (GFQGSIKRNGQHRGPMAHGSRYHRR) are disordered.

Belongs to the universal ribosomal protein uL3 family. Part of the 50S ribosomal subunit. Forms a cluster with proteins L14 and L19.

Functionally, one of the primary rRNA binding proteins, it binds directly near the 3'-end of the 23S rRNA, where it nucleates assembly of the 50S subunit. This chain is Large ribosomal subunit protein uL3, found in Ligilactobacillus salivarius (strain UCC118) (Lactobacillus salivarius).